Here is an 838-residue protein sequence, read N- to C-terminus: Shutoff protein (838 aa).

The tract at residues 1 to 102 is disordered; it reads MEDQHSAASE…EQEEDSPDRY (102 aa). Positions 18-35 are enriched in pro residues; the sequence is TLPPPPPPPPPPTSPPPS. Over residues 52–65 the composition is skewed to low complexity; sequence TCSSSSSSSASSEC. The binding to host EIF4G stretch occupies residues 291–353; it reads LMQTLLVRRA…ACMVTVQLHC (63 aa). An RRM domain is found at 356-474; sequence TFLTSREMVR…SLWTGFDERT (119 aa). 2 positions are modified to phosphotyrosine; by host: tyrosine 373 and tyrosine 690. The tract at residues 693-838 is disordered; that stretch reads PHTGEELNTA…QELRRPQRGS (146 aa). The span at 701 to 710 shows a compositional bias: low complexity; it reads TAAPSTAHHA. Basic and acidic residues-rich tracts occupy residues 737–746 and 770–787; these read SYADRVRSEL and HSRDAARRRGSQQRDQRQ. Residues 813-829 show a composition bias toward low complexity; sequence QALLHQQQQQQEHQPAQ.

It belongs to the adenoviridae shutoff protein family. Monomer. Interacts with hexon protein; this interaction allows chaperoning and trimerization of hexon proteins. Interacts (via N-terminus) with host initiation factor EIF4G (via C-terminus). Interacts (via RRM domain) with viral mRNAs that contain the tripartite leader; this interaction allows ribosome shunting and expression of viral late mRNAs. In terms of processing, might be cleaved by the viral protease. Phosphorylated. Tyrosine phosphorylation enhances preferential binding to tripartite leader mRNAs and allows ribosome shunting. Post-translationally, methylated. Asymmetric dimethylation by host PRMT1 of the Arg/Gly-rich region may regulate shutoff protein binding to hexon and promote the capsid assembly in the nucleus.

The protein localises to the host cytoplasm. Protein that inhibits host translation while promoting late viral translation by ribosome shunting. Blocks host cap-dependent translation by binding to eIF4G, displacing MKNK1 from cap initiation complexes and preventing EIF4E phosphorylation. Binds to the tripartite leader sequence of viral late mRNAs and recruits host eIF4G, PABPC1/poly-A binding protein and 40S ribosomes subunits on viral mRNAs, allowing ribosome shunting and efficient translation of late viral mRNAs even though conventional translation via ribosome scanning from the cap has been shut off in the host cell. During assembly, acts as a chaperone protein that helps hexon proteins assembly into trimers. This is Shutoff protein from Porcine adenovirus A serotype 3 (PAdV-3).